The primary structure comprises 517 residues: Glucose-6-phosphate isomerase (517 aa).

E345 acts as the Proton donor in catalysis. Residues H376 and K490 contribute to the active site.

This sequence belongs to the GPI family.

The protein resides in the cytoplasm. It carries out the reaction alpha-D-glucose 6-phosphate = beta-D-fructose 6-phosphate. The protein operates within carbohydrate biosynthesis; gluconeogenesis. It functions in the pathway carbohydrate degradation; glycolysis; D-glyceraldehyde 3-phosphate and glycerone phosphate from D-glucose: step 2/4. In terms of biological role, catalyzes the reversible isomerization of glucose-6-phosphate to fructose-6-phosphate. This Erythrobacter litoralis (strain HTCC2594) protein is Glucose-6-phosphate isomerase.